A 338-amino-acid polypeptide reads, in one-letter code: Fructose-1,6-bisphosphatase class 1 (338 aa).

The Mg(2+) site is built by glutamate 92, aspartate 114, leucine 116, and aspartate 117. Substrate contacts are provided by residues 117–120 (DGSS), asparagine 210, tyrosine 243, and lysine 276. A Mg(2+)-binding site is contributed by glutamate 282.

This sequence belongs to the FBPase class 1 family. Homotetramer. The cofactor is Mg(2+).

The protein resides in the cytoplasm. The enzyme catalyses beta-D-fructose 1,6-bisphosphate + H2O = beta-D-fructose 6-phosphate + phosphate. Its pathway is carbohydrate biosynthesis; gluconeogenesis. The chain is Fructose-1,6-bisphosphatase class 1 from Maridesulfovibrio salexigens (strain ATCC 14822 / DSM 2638 / NCIMB 8403 / VKM B-1763) (Desulfovibrio salexigens).